Here is a 787-residue protein sequence, read N- to C-terminus: Dolichyl-diphosphooligosaccharide--protein glycosyltransferase subunit STT3A (787 aa).

The Cytoplasmic segment spans residues 1 to 18; sequence MAEPESSTAAAGGSRLRN. A helical membrane pass occupies residues 19-39; the sequence is ACGGVLCAFTLLLIGVLAFSI. Residues 40-125 are Lumenal-facing; it reads RLFSVIKYES…LSVETVCVFT (86 aa). The DXD motif 1 signature appears at 53-55; that stretch reads EFD. Asp55 contacts Mn(2+). A helical transmembrane segment spans residues 126–144; sequence APIFSANASWATYLLTKEA. Residues 145–146 are Cytoplasmic-facing; it reads KG. Residues 147-164 form a helical membrane-spanning segment; that stretch reads TGAGLMAAAILAMVPSYI. The Lumenal portion of the chain corresponds to 165–175; that stretch reads SRSVAGSYDNE. 2 residues coordinate Mn(2+): Asp173 and Glu175. The short motif at 173-175 is the DXD motif 2 element; it reads DNE. Residues 176 to 195 form a helical membrane-spanning segment; the sequence is AVAIFALIFTFYLYVKTLNT. Over 196 to 197 the chain is Cytoplasmic; the sequence is GS. Residues 198–212 traverse the membrane as a helical segment; that stretch reads LFYATLNALSYFYMV. At 213–217 the chain is on the lumenal side; that stretch reads CSWGG. Residues 218–234 form a helical membrane-spanning segment; sequence YTFIINLIPIHVLLCIV. The Cytoplasmic segment spans residues 235–239; the sequence is TGRYS. A helical membrane pass occupies residues 240–265; the sequence is SRLYIAYAPLVILGTLLAALVPVVGF. Residues 266–273 lie on the Lumenal side of the membrane; sequence NAVMTSEH. Residues 274–293 form a helical membrane-spanning segment; sequence FASFLVFIILHVVALVYYIK. The Cytoplasmic portion of the chain corresponds to 294 to 306; the sequence is GLLTPRLFKVAMT. A helical transmembrane segment spans residues 307 to 327; the sequence is LVITVGLAVCFAVIAILIALV. Topologically, residues 328-365 are lumenal; the sequence is ASSPTKGWSGRSLSLLDPTYASKYIPIIASVSEHQPPT. Residues 357-360 carry the SVSE motif motif; it reads SVSE. Residues 366 to 388 form a helical membrane-spanning segment; it reads WPSYFMDINVLAFLIPAGIISCF. Topologically, residues 389 to 394 are cytoplasmic; it reads LPLSDA. A helical membrane pass occupies residues 395 to 411; the sequence is SSFVVLYLVTAVYFSGV. Over 412–415 the chain is Lumenal; that stretch reads MVRL. Arg414 provides a ligand contact to dolichyl diphosphooligosaccharide. Residues 416–437 form a helical membrane-spanning segment; it reads MLVLAPAACILSGIALSEAFDV. Topologically, residues 438-525 are cytoplasmic; it reads LTRSVKYQLS…KLLVLPMEAS (88 aa). The segment covering 453 to 475 has biased composition (low complexity); sequence SPAASGDSSAESSSASTVSTNSA. The segment at 453-507 is disordered; the sequence is SPAASGDSSAESSSASTVSTNSAKNETRPEKTETAPKEKPSKKNRKKEKEVAESV. Residues 477–504 show a composition bias toward basic and acidic residues; that stretch reads NETRPEKTETAPKEKPSKKNRKKEKEVA. A helical transmembrane segment spans residues 526–546; the sequence is VLGILLLIVLGGFYVVHCVWA. Residues 547–787 lie on the Lumenal side of the membrane; that stretch reads AAEAYSAPSI…AAGRKKNPWQ (241 aa). The interval 592–594 is interacts with target acceptor peptide in protein substrate; the sequence is WWD. A WWDYG motif motif is present at residues 592-596; the sequence is WWDYG. A dolichyl diphosphooligosaccharide-binding site is contributed by Tyr597. N-linked (GlcNAc...) asparagine glycans are attached at residues Asn604 and Asn611. The N-linked (GlcNAc...) (high mannose) asparagine glycan is linked to Asn615. The DK motif motif lies at 659-666; that stretch reads DINKFLWM. Basic residues predominate over residues 759–769; that stretch reads RVRGKLKKLKS. Residues 759-787 form a disordered region; the sequence is RVRGKLKKLKSGSKASSTNAAGRKKNPWQ.

This sequence belongs to the STT3 family. As to quaternary structure, component of the oligosaccharyltransferase (OST) complex. Requires Mg(2+) as cofactor. It depends on Mn(2+) as a cofactor.

Its subcellular location is the endoplasmic reticulum membrane. The catalysed reaction is a di-trans,poly-cis-dolichyl diphosphooligosaccharide + L-asparaginyl-[protein] = N(4)-(oligosaccharide-(1-&gt;4)-N-acetyl-beta-D-glucosaminyl-(1-&gt;4)-N-acetyl-beta-D-glucosaminyl)-L-asparaginyl-[protein] + a di-trans,poly-cis-dolichyl diphosphate + H(+). It functions in the pathway protein modification; protein glycosylation. Its function is as follows. Catalytic subunit of the oligosaccharyl transferase (OST) complex that catalyzes the initial transfer of a defined glycan (Glc(3)Man(9)GlcNAc(2) in eukaryotes) from the lipid carrier dolichol-pyrophosphate to an asparagine residue within an Asn-X-Ser/Thr consensus motif in nascent polypeptide chains, the first step in protein N-glycosylation. N-glycosylation occurs cotranslationally and the complex associates with the Sec61 complex at the channel-forming translocon complex that mediates protein translocation across the endoplasmic reticulum (ER). All subunits are required for a maximal enzyme activity. This subunit contains the active site and the acceptor peptide and donor lipid-linked oligosaccharide (LLO) binding pockets. The protein is Dolichyl-diphosphooligosaccharide--protein glycosyltransferase subunit STT3A (STT3A) of Oryza sativa subsp. japonica (Rice).